A 209-amino-acid polypeptide reads, in one-letter code: Protein-L-isoaspartate O-methyltransferase (209 aa).

Residue S59 is part of the active site.

It belongs to the methyltransferase superfamily. L-isoaspartyl/D-aspartyl protein methyltransferase family. In terms of assembly, monomer.

Its subcellular location is the cytoplasm. The catalysed reaction is [protein]-L-isoaspartate + S-adenosyl-L-methionine = [protein]-L-isoaspartate alpha-methyl ester + S-adenosyl-L-homocysteine. Catalyzes the methyl esterification of L-isoaspartyl residues in peptides and proteins that result from spontaneous decomposition of normal L-aspartyl and L-asparaginyl residues. It plays a role in the repair and/or degradation of damaged proteins. This is Protein-L-isoaspartate O-methyltransferase (pcm) from Helicobacter pylori (strain J99 / ATCC 700824) (Campylobacter pylori J99).